Here is a 189-residue protein sequence, read N- to C-terminus: HTH-type transcriptional regulator Hpr (189 aa).

Residues 12 to 156 enclose the HTH marR-type domain; it reads ALLYSHKIVQ…ISAIVRRLYG (145 aa). Residues 62–85 constitute a DNA-binding region (H-T-H motif); it reads ISEIAKYGVMHVSTAFNFSKKLED.

Homodimer.

Negative regulator of protease production and sporulation. This Exiguobacterium sibiricum (strain DSM 17290 / CCUG 55495 / CIP 109462 / JCM 13490 / 255-15) protein is HTH-type transcriptional regulator Hpr.